Here is an 837-residue protein sequence, read N- to C-terminus: Ubiquitin carboxyl-terminal hydrolase A (837 aa).

The UBP-type; degenerate zinc-finger motif lies at 166 to 277 (PSAFAESIIQ…QHLTHWGLNP (112 aa)). In terms of domain architecture, USP spans 319-835 (TGIENLGNSC…LGYIYFYKRQ (517 aa)). Cys328 (nucleophile) is an active-site residue. Residues 628–669 (SFNQEVLDTLLSMDFPLVRCKKALLATGGKDAELAMNWIFEH) enclose the UBA 1 domain. The disordered stretch occupies residues 676–695 (DIEQTPVNNNNNNNNSSNSN). The span at 683-695 (NNNNNNNNSSNSN) shows a compositional bias: low complexity. The 41-residue stretch at 700–740 (VFNSQDVDNIIGMGFTDSQAKLALKNTKGNLERAADWLFSH) folds into the UBA 2 domain. Residue His797 is the Proton acceptor of the active site.

It belongs to the peptidase C19 family.

It catalyses the reaction Thiol-dependent hydrolysis of ester, thioester, amide, peptide and isopeptide bonds formed by the C-terminal Gly of ubiquitin (a 76-residue protein attached to proteins as an intracellular targeting signal).. In terms of biological role, required for development but not growth. The polypeptide is Ubiquitin carboxyl-terminal hydrolase A (ubpA) (Dictyostelium discoideum (Social amoeba)).